The following is a 520-amino-acid chain: MSTNPKPQRKTKRNTNRRPQDVKFPGGGQIVGGVYLLTRRGPRLGVRATRKTSERSQPRGRRQPIPKARRPEGRAWAQPGYPWPLYGNEGLGWAGWLLSPRGSRPSWGPTDPRRRSRNLGKVIDTLTCGFADLMGYIPLVGAPLGGASRALAHGVRVLEDGVNYATGNLPGCSFSIFLSALMSCLTTPASAYEVRNVSGIYHVTNDCSNSSIAYEAAGMIMHTPGCVPCVRENNSSRCWVALTPTLAARNASVPTTTIRRHVDLLVGAATLCSAMYVGDLCGSVFLVSQLFTFSPRRYETVQDCNCSIYPGHVSGHRMAWDMMMNWSPTAALVVSQLLRIPQAVVDMVAGAHWGVLAGLAYYSMVGNWAKVLIVMLLFAGVDGANTHTVGGTEGFATQRLTSLFALGPSQKIQLINTNGSWHINRTALNCNDSFKTGFLAALFYVHKFNASGCPEHMASCRPIDKFDQGWGPVTYAEPSISEQRPYCWHYAPRPCGTIPASEVCGPVYCFTPSPVVVGTT.

Serine 2 carries the post-translational modification N-acetylserine; by host. Residues 2 to 23 form an interaction with STAT1 region; the sequence is STNPKPQRKTKRNTNRRPQDVK. Residues 2-58 form an interaction with EIF2AK2/PKR region; the sequence is STNPKPQRKTKRNTNRRPQDVKFPGGGQIVGGVYLLTRRGPRLGVRATRKTSERSQP. Residues 2-59 are interaction with DDX3X; sequence STNPKPQRKTKRNTNRRPQDVKFPGGGQIVGGVYLLTRRGPRLGVRATRKTSERSQPR. Positions 2-75 are disordered; the sequence is STNPKPQRKT…PKARRPEGRA (74 aa). At 2–168 the chain is on the cytoplasmic side; sequence STNPKPQRKT…EDGVNYATGN (167 aa). 2 short sequence motifs (nuclear localization signal) span residues 5 to 13 and 38 to 43; these read PKPQRKTKR and TRRGPR. Basic residues predominate over residues 7–16; it reads PQRKTKRNTN. Serine 53 carries the phosphoserine; by host modification. Short sequence motifs (nuclear localization signal) lie at residues 58 to 64 and 66 to 71; these read PRGRRQP and PKARRP. A compositionally biased stretch (basic residues) spans 58–68; that stretch reads PRGRRQPIPKA. Phosphoserine; by host is present on serine 99. Positions 112 to 152 are important for endoplasmic reticulum and mitochondrial localization; it reads PRRRSRNLGKVIDTLTCGFADLMGYIPLVGAPLGGASRALA. Serine 116 is modified (phosphoserine; by host PKA). The tract at residues 122–173 is interaction with APOA2; that stretch reads VIDTLTCGFADLMGYIPLVGAPLGGASRALAHGVRVLEDGVNYATGNLPGCS. The important for lipid droplets localization stretch occupies residues 164–167; that stretch reads YATG. The helical transmembrane segment at 169–189 threads the bilayer; that stretch reads LPGCSFSIFLSALMSCLTTPA. The propeptide at 178–191 is ER anchor for the core protein, removed in mature form by host signal peptidase; that stretch reads LSALMSCLTTPASA. The Lumenal portion of the chain corresponds to 190 to 358; sequence SAYEVRNVSG…AGAHWGVLAG (169 aa). Residues asparagine 196, asparagine 209, asparagine 234, and asparagine 250 are each glycosylated (N-linked (GlcNAc...) asparagine; by host). Residues 265–296 form an important for fusion region; the sequence is LVGAATLCSAMYVGDLCGSVFLVSQLFTFSPR. An N-linked (GlcNAc...) asparagine; by host glycan is attached at asparagine 305. The helical transmembrane segment at 359-379 threads the bilayer; that stretch reads LAYYSMVGNWAKVLIVMLLFA. The Lumenal portion of the chain corresponds to 380–520; that stretch reads GVDGANTHTV…TPSPVVVGTT (141 aa). An HVR1 region spans residues 385–411; the sequence is NTHTVGGTEGFATQRLTSLFALGPSQK. Asparagine 418 carries N-linked (GlcNAc...) asparagine; by host glycosylation. Residues asparagine 424, asparagine 431, and asparagine 449 are each glycosylated (N-linked (GlcNAc...) (high mannose) asparagine; by host). The cysteines at positions 453 and 460 are disulfide-linked. Residues 474–479 are HVR2; it reads TYAEPS. The CD81-binding 1 stretch occupies residues 480 to 493; the sequence is ISEQRPYCWHYAPR. 2 cysteine pairs are disulfide-bonded: cysteine 487-cysteine 495 and cysteine 504-cysteine 509.

It belongs to the hepacivirus polyprotein family. In terms of assembly, homooligomer. Interacts with E1 (via C-terminus). Interacts with the non-structural protein 5A. Interacts (via N-terminus) with host STAT1 (via SH2 domain); this interaction results in decreased STAT1 phosphorylation and ubiquitin-mediated proteasome-dependent STAT1 degradation, leading to decreased IFN-stimulated gene transcription. Interacts with host STAT3; this interaction constitutively activates STAT3. Interacts with host LTBR receptor. Interacts with host TNFRSF1A receptor and possibly induces apoptosis. Interacts with host HNRPK. Interacts with host YWHAE. Interacts with host UBE3A/E6AP. Interacts with host DDX3X. Interacts with host APOA2. Interacts with host RXRA protein. Interacts with host SP110 isoform 3/Sp110b; this interaction sequesters the transcriptional corepressor SP110 away from the nucleus. Interacts with host CREB3 nuclear transcription protein; this interaction triggers cell transformation. Interacts with host ACY3. Interacts with host C1QR1. Interacts with host RBM24; this interaction, which enhances the interaction of the mature core protein with 5'-UTR, may inhibit viral translation and favor replication. Interacts with host EIF2AK2/PKR; this interaction induces the autophosphorylation of EIF2AK2. Part of the viral assembly initiation complex composed of NS2, E1, E2, NS3, NS4A, NS5A and the mature core protein. Forms a heterodimer with envelope glycoprotein E2. Interacts with mature core protein. Interacts with protease NS2. The heterodimer E1/E2 interacts with host CLDN1; this interaction plays a role in viral entry into host cell. Interacts with host SPSB2 (via C-terminus). Part of the viral assembly initiation complex composed of NS2, E1, E2, NS3, NS4A, NS5A and the mature core protein. As to quaternary structure, forms a heterodimer with envelope glycoprotein E1. Interacts with host CD81 and SCARB1 receptors; these interactions play a role in viral entry into host cell. Interacts with host EIF2AK2/PKR; this interaction inhibits EIF2AK2 and probably allows the virus to evade the innate immune response. Interacts with host CD209/DC-SIGN and CLEC4M/DC-SIGNR. Interact with host SPCS1; this interaction is essential for viral particle assembly. Interacts with protease NS2. The heterodimer E1/E2 interacts with host CLDN1; this interaction plays a role in viral entry into host cell. Part of the viral assembly initiation complex composed of NS2, E1, E2, NS3, NS4A, NS5A and the mature core protein. In terms of processing, specific enzymatic cleavages in vivo yield mature proteins. The structural proteins, core, E1, E2 and p7 are produced by proteolytic processing by host signal peptidases. The core protein precursor is synthesized as a 23 kDa, which is retained in the ER membrane through the hydrophobic signal peptide. Cleavage by the signal peptidase releases the 21 kDa mature core protein. The cleavage of the core protein precursor occurs between aminoacids 176 and 188 but the exact cleavage site is not known. Some degraded forms of the core protein appear as well during the course of infection. The other proteins (p7, NS2, NS3, NS4A, NS4B, NS5A and NS5B) are cleaved by the viral proteases. Autoprocessing between NS2 and NS3 is mediated by the NS2 cysteine protease catalytic domain and regulated by the NS3 N-terminal domain. Phosphorylated by host PKC and PKA. Post-translationally, ubiquitinated; mediated by UBE3A and leading to core protein subsequent proteasomal degradation. In terms of processing, highly N-glycosylated.

The protein resides in the host endoplasmic reticulum membrane. It localises to the host mitochondrion membrane. It is found in the virion. The protein localises to the host cytoplasm. Its subcellular location is the host nucleus. The protein resides in the host lipid droplet. It localises to the virion membrane. Packages viral RNA to form a viral nucleocapsid, and promotes virion budding. Participates in the viral particle production as a result of its interaction with the non-structural protein 5A. Binds RNA and may function as a RNA chaperone to induce the RNA structural rearrangements taking place during virus replication. Modulates viral translation initiation by interacting with viral IRES and 40S ribosomal subunit. Affects various cell signaling pathways, host immunity and lipid metabolism. Prevents the establishment of cellular antiviral state by blocking the interferon-alpha/beta (IFN-alpha/beta) and IFN-gamma signaling pathways and by blocking the formation of phosphorylated STAT1 and promoting ubiquitin-mediated proteasome-dependent degradation of STAT1. Activates STAT3 leading to cellular transformation. Regulates the activity of cellular genes, including c-myc and c-fos. May repress the promoter of p53, and sequester CREB3 and SP110 isoform 3/Sp110b in the cytoplasm. Represses cell cycle negative regulating factor CDKN1A, thereby interrupting an important check point of normal cell cycle regulation. Targets transcription factors involved in the regulation of inflammatory responses and in the immune response: suppresses TNF-induced NF-kappa-B activation, and activates AP-1. Binds to dendritic cells (DCs) via C1QR1, resulting in down-regulation of T-lymphocytes proliferation. Alters lipid metabolism by interacting with hepatocellular proteins involved in lipid accumulation and storage. Induces up-regulation of FAS promoter activity, and thereby contributes to the increased triglyceride accumulation in hepatocytes (steatosis). Its function is as follows. Forms a heterodimer with envelope glycoprotein E2, which mediates virus attachment to the host cell, virion internalization through clathrin-dependent endocytosis and fusion with host membrane. Fusion with the host cell is most likely mediated by both E1 and E2, through conformational rearrangements of the heterodimer required for fusion rather than a classical class II fusion mechanism. E1/E2 heterodimer binds host apolipoproteins such as APOB and ApoE thereby forming a lipo-viro-particle (LVP). APOE associated to the LVP allows the initial virus attachment to cell surface receptors such as the heparan sulfate proteoglycans (HSPGs), syndecan-1 (SDC1), syndecan-1 (SDC2), the low-density lipoprotein receptor (LDLR) and scavenger receptor class B type I (SCARB1). The cholesterol transfer activity of SCARB1 allows E2 exposure and binding of E2 to SCARB1 and the tetraspanin CD81. E1/E2 heterodimer binding on CD81 activates the epithelial growth factor receptor (EGFR) signaling pathway. Diffusion of the complex E1-E2-EGFR-SCARB1-CD81 to the cell lateral membrane allows further interaction with Claudin 1 (CLDN1) and occludin (OCLN) to finally trigger HCV entry. Functionally, forms a heterodimer with envelope glycoprotein E1, which mediates virus attachment to the host cell, virion internalization through clathrin-dependent endocytosis and fusion with host membrane. Fusion with the host cell is most likely mediated by both E1 and E2, through conformational rearrangements of the heterodimer required for fusion rather than a classical class II fusion mechanism. The interaction between envelope glycoprotein E2 and host apolipoprotein E/APOE allows the proper assembly, maturation and infectivity of the viral particles. This interaction is probably promoted via the up-regulation of cellular autophagy by the virus. E1/E2 heterodimer binds host apolipoproteins such as APOB and APOE thereby forming a lipo-viro-particle (LVP). APOE associated to the LVP allows the initial virus attachment to cell surface receptors such as the heparan sulfate proteoglycans (HSPGs), syndecan-1 (SDC1), syndecan-1 (SDC2), the low-density lipoprotein receptor (LDLR) and scavenger receptor class B type I (SCARB1). The cholesterol transfer activity of SCARB1 allows E2 exposure and binding of E2 to SCARB1 and the tetraspanin CD81. E1/E2 heterodimer binding on CD81 activates the epithelial growth factor receptor (EGFR) signaling pathway. Diffusion of the complex E1-E2-EGFR-SCARB1-CD81 to the cell lateral membrane allows further interaction with Claudin 1 (CLDN1) and occludin (OCLN) to finally trigger HCV entry. Inhibits host EIF2AK2/PKR activation, preventing the establishment of an antiviral state. Viral ligand for CD209/DC-SIGN and CLEC4M/DC-SIGNR, which are respectively found on dendritic cells (DCs), and on liver sinusoidal endothelial cells and macrophage-like cells of lymph node sinuses. These interactions allow the capture of circulating HCV particles by these cells and subsequent facilitated transmission to permissive cells such as hepatocytes and lymphocyte subpopulations. The sequence is that of Genome polyprotein from Hepatitis C virus (isolate HCV-KF) (HCV).